A 78-amino-acid polypeptide reads, in one-letter code: Metallothionein-like protein type 2 (78 aa).

Belongs to the metallothionein superfamily. Type 15 family.

Functionally, metallothioneins have a high content of cysteine residues that bind various heavy metals. The chain is Metallothionein-like protein type 2 from Nicotiana glutinosa (Tobacco).